We begin with the raw amino-acid sequence, 173 residues long: MTLEEIKMMIREIPDFPKKGIKFKDITPVLKDAKAFNYSIEMLAKALEGRKFDLIAAPEARGFLFGAPLAYRLGVGFVPVRKPGKLPAETLSYEYELEYGTDSLEIHKDAVLEGQRVVIVDDLLATGGTIYASAKLVESLGGIVDSIIFLTELTFLDGRKKLDGYDIISLIKF.

It belongs to the purine/pyrimidine phosphoribosyltransferase family. Homodimer.

It localises to the cytoplasm. It catalyses the reaction AMP + diphosphate = 5-phospho-alpha-D-ribose 1-diphosphate + adenine. It functions in the pathway purine metabolism; AMP biosynthesis via salvage pathway; AMP from adenine: step 1/1. Its function is as follows. Catalyzes a salvage reaction resulting in the formation of AMP, that is energically less costly than de novo synthesis. This is Adenine phosphoribosyltransferase from Thermoanaerobacter pseudethanolicus (strain ATCC 33223 / 39E) (Clostridium thermohydrosulfuricum).